Consider the following 346-residue polypeptide: 3-isopropylmalate dehydrogenase (346 aa).

76–87 (GPKWTDPNNRPE) is a binding site for NAD(+). Positions 94, 104, 132, and 217 each coordinate substrate. Asp-217, Asp-241, and Asp-245 together coordinate Mg(2+). An NAD(+)-binding site is contributed by 275-287 (GSAPDIANQDIAN).

This sequence belongs to the isocitrate and isopropylmalate dehydrogenases family. LeuB type 1 subfamily. Homodimer. It depends on Mg(2+) as a cofactor. Mn(2+) serves as cofactor.

The protein resides in the cytoplasm. It carries out the reaction (2R,3S)-3-isopropylmalate + NAD(+) = 4-methyl-2-oxopentanoate + CO2 + NADH. The protein operates within amino-acid biosynthesis; L-leucine biosynthesis; L-leucine from 3-methyl-2-oxobutanoate: step 3/4. Catalyzes the oxidation of 3-carboxy-2-hydroxy-4-methylpentanoate (3-isopropylmalate) to 3-carboxy-4-methyl-2-oxopentanoate. The product decarboxylates to 4-methyl-2 oxopentanoate. The protein is 3-isopropylmalate dehydrogenase of Staphylococcus saprophyticus subsp. saprophyticus (strain ATCC 15305 / DSM 20229 / NCIMB 8711 / NCTC 7292 / S-41).